The sequence spans 183 residues: 2-C-methyl-D-erythritol 2,4-cyclodiphosphate synthase (183 aa).

The a divalent metal cation site is built by Asp-8 and His-10. Residues 8-10 and 34-35 each bind 4-CDP-2-C-methyl-D-erythritol 2-phosphate; these read DVH and HS. His-42 is an a divalent metal cation binding site. 4-CDP-2-C-methyl-D-erythritol 2-phosphate is bound by residues 56 to 58, 61 to 65, 132 to 135, and Phe-139; these read DIG, FPDTD, and TTEE.

This sequence belongs to the IspF family. As to quaternary structure, homotrimer. The cofactor is a divalent metal cation.

The catalysed reaction is 4-CDP-2-C-methyl-D-erythritol 2-phosphate = 2-C-methyl-D-erythritol 2,4-cyclic diphosphate + CMP. It functions in the pathway isoprenoid biosynthesis; isopentenyl diphosphate biosynthesis via DXP pathway; isopentenyl diphosphate from 1-deoxy-D-xylulose 5-phosphate: step 4/6. Its function is as follows. Involved in the biosynthesis of isopentenyl diphosphate (IPP) and dimethylallyl diphosphate (DMAPP), two major building blocks of isoprenoid compounds. Catalyzes the conversion of 4-diphosphocytidyl-2-C-methyl-D-erythritol 2-phosphate (CDP-ME2P) to 2-C-methyl-D-erythritol 2,4-cyclodiphosphate (ME-CPP) with a corresponding release of cytidine 5-monophosphate (CMP). The sequence is that of 2-C-methyl-D-erythritol 2,4-cyclodiphosphate synthase from Lachnospira eligens (strain ATCC 27750 / DSM 3376 / VPI C15-48 / C15-B4) (Eubacterium eligens).